Here is a 388-residue protein sequence, read N- to C-terminus: Succinate--CoA ligase [ADP-forming] subunit beta (388 aa).

One can recognise an ATP-grasp domain in the interval 9–244 (KQLFARYGLP…QSQEDPREAQ (236 aa)). ATP-binding positions include Lys46, 53–55 (GRG), Glu99, Thr102, and Glu107. Residues Asn199 and Asp213 each coordinate Mg(2+). Residues Asn264 and 321 to 323 (GIV) contribute to the substrate site.

Belongs to the succinate/malate CoA ligase beta subunit family. Heterotetramer of two alpha and two beta subunits. Requires Mg(2+) as cofactor.

The catalysed reaction is succinate + ATP + CoA = succinyl-CoA + ADP + phosphate. It catalyses the reaction GTP + succinate + CoA = succinyl-CoA + GDP + phosphate. The protein operates within carbohydrate metabolism; tricarboxylic acid cycle; succinate from succinyl-CoA (ligase route): step 1/1. Functionally, succinyl-CoA synthetase functions in the citric acid cycle (TCA), coupling the hydrolysis of succinyl-CoA to the synthesis of either ATP or GTP and thus represents the only step of substrate-level phosphorylation in the TCA. The beta subunit provides nucleotide specificity of the enzyme and binds the substrate succinate, while the binding sites for coenzyme A and phosphate are found in the alpha subunit. In Shigella dysenteriae serotype 1 (strain Sd197), this protein is Succinate--CoA ligase [ADP-forming] subunit beta.